Reading from the N-terminus, the 122-residue chain is Fluoride-specific ion channel FluC (122 aa).

Transmembrane regions (helical) follow at residues 4 to 24 (LLIA…GTAI), 34 to 54 (IGTM…MTLL), 66 to 86 (LALV…EWET), and 95 to 115 (FWIG…AVWF). Residues G74 and T77 each coordinate Na(+).

The protein belongs to the fluoride channel Fluc/FEX (TC 1.A.43) family.

The protein localises to the cell inner membrane. The enzyme catalyses fluoride(in) = fluoride(out). Na(+) is not transported, but it plays an essential structural role and its presence is essential for fluoride channel function. Fluoride-specific ion channel. Important for reducing fluoride concentration in the cell, thus reducing its toxicity. The chain is Fluoride-specific ion channel FluC from Solibacter usitatus (strain Ellin6076).